The sequence spans 1040 residues: Vacuolar membrane protease (1040 aa).

Residues methionine 1–proline 9 are Cytoplasmic-facing. A helical membrane pass occupies residues glycine 10–isoleucine 30. At asparagine 31 to methionine 405 the chain is on the vacuolar side. N-linked (GlcNAc...) asparagine glycosylation is found at asparagine 48, asparagine 117, asparagine 120, and asparagine 129. Residues histidine 186 and aspartate 198 each coordinate Zn(2+). The Proton acceptor role is filled by glutamate 232. Zn(2+) is bound by residues glutamate 233, glutamate 258, and histidine 331. A helical transmembrane segment spans residues phenylalanine 406 to leucine 426. Over leucine 427 to phenylalanine 436 the chain is Cytoplasmic. The helical transmembrane segment at threonine 437–tryptophan 456 threads the bilayer. Residues lysine 457–tryptophan 462 are Vacuolar-facing. Residues alanine 463–valine 483 traverse the membrane as a helical segment. The Cytoplasmic portion of the chain corresponds to arginine 484–arginine 490. The helical transmembrane segment at glycine 491–leucine 511 threads the bilayer. Residues glutamate 512 to tyrosine 521 are Vacuolar-facing. Residues isoleucine 522–leucine 542 traverse the membrane as a helical segment. Topologically, residues alanine 543–histidine 715 are cytoplasmic. The tract at residues histidine 563–threonine 680 is disordered. Low complexity-rich tracts occupy residues serine 577 to proline 594 and alanine 616 to proline 626. Residues glycine 636 to threonine 647 are compositionally biased toward polar residues. A compositionally biased stretch (acidic residues) spans aspartate 650–alanine 661. Residues leucine 716 to alanine 736 traverse the membrane as a helical segment. The Vacuolar segment spans residues alanine 737–phenylalanine 758. The chain crosses the membrane as a helical span at residues threonine 759 to isoleucine 779. Over histidine 780–histidine 785 the chain is Cytoplasmic. A helical membrane pass occupies residues isoleucine 786 to proline 806. Over phenylalanine 807–valine 1040 the chain is Vacuolar. The N-linked (GlcNAc...) asparagine glycan is linked to asparagine 900.

The protein belongs to the peptidase M28 family. Zn(2+) serves as cofactor.

The protein resides in the vacuole membrane. In terms of biological role, may be involved in vacuolar sorting and osmoregulation. The sequence is that of Vacuolar membrane protease from Sordaria macrospora (strain ATCC MYA-333 / DSM 997 / K(L3346) / K-hell).